Consider the following 584-residue polypeptide: Membrane frizzled-related protein (584 aa).

At 1–69 (MKDYDDVILR…QPDCHFSWFC (69 aa)) the chain is on the cytoplasmic side. Residues 70 to 90 (ILLLSGLLLLLLGLLVAVILA) form a helical; Signal-anchor for type II membrane protein membrane-spanning segment. The Extracellular segment spans residues 91 to 584 (QLQATSLPRT…AASLEACSQP (494 aa)). The disordered stretch occupies residues 108 to 140 (RGLTPMGVIPSTTPNTTTTTTTTTPARTGQQEA). Positions 119 to 132 (TTPNTTTTTTTTTP) are enriched in low complexity. 2 disulfide bridges follow: cysteine 150/cysteine 176 and cysteine 203/cysteine 222. One can recognise a CUB 1 domain in the interval 150–259 (CGGLLPGPSG…SGFQAWYQAV (110 aa)). Asparagine 233 is a glycosylation site (N-linked (GlcNAc...) asparagine). Positions 265–301 (SCAHNEFHCDLLLCLKRDSVCDGITECADGSDEANCS) constitute an LDL-receptor class A 1 domain. 5 disulfides stabilise this stretch: cysteine 266–cysteine 278, cysteine 273–cysteine 291, cysteine 285–cysteine 300, cysteine 307–cysteine 333, and cysteine 360–cysteine 383. In terms of domain architecture, CUB 2 spans 307-420 (CGGNLTGLYG…GGFLATYQAI (114 aa)). N-linked (GlcNAc...) asparagine glycosylation occurs at asparagine 421. One can recognise an LDL-receptor class A 2 domain in the interval 426 to 460 (GCPWAEFCQSGGYRDLQWMCDLWKDCANDSNDNCS). Intrachain disulfides connect cysteine 433-cysteine 451, cysteine 445-cysteine 459, cysteine 471-cysteine 533, cysteine 479-cysteine 526, cysteine 517-cysteine 554, cysteine 543-cysteine 581, and cysteine 547-cysteine 569. An N-linked (GlcNAc...) asparagine glycan is attached at asparagine 458. Residues 466–584 (QPDLTCEPVQ…AASLEACSQP (119 aa)) form the FZ domain.

In terms of assembly, interacts with C1QTNF5. Expressed in retinal pigment epithelium and ciliary epithelium of the eye.

It is found in the apical cell membrane. Its function is as follows. May play a role in eye development. This chain is Membrane frizzled-related protein (Mfrp), found in Mus musculus (Mouse).